The chain runs to 235 residues: NADH-quinone oxidoreductase subunit C (235 aa).

The protein belongs to the complex I 30 kDa subunit family. In terms of assembly, NDH-1 is composed of 14 different subunits. Subunits NuoB, C, D, E, F, and G constitute the peripheral sector of the complex.

The protein localises to the cell membrane. It catalyses the reaction a quinone + NADH + 5 H(+)(in) = a quinol + NAD(+) + 4 H(+)(out). In terms of biological role, NDH-1 shuttles electrons from NADH, via FMN and iron-sulfur (Fe-S) centers, to quinones in the respiratory chain. The immediate electron acceptor for the enzyme in this species is believed to be a menaquinone. Couples the redox reaction to proton translocation (for every two electrons transferred, four hydrogen ions are translocated across the cytoplasmic membrane), and thus conserves the redox energy in a proton gradient. The chain is NADH-quinone oxidoreductase subunit C from Mycobacterium avium (strain 104).